We begin with the raw amino-acid sequence, 312 residues long: DNA-directed RNA polymerase subunit alpha (312 aa).

The tract at residues 1–226 (MIEFEKPIIT…EHLNLFTDLT (226 aa)) is alpha N-terminal domain (alpha-NTD). Positions 243 to 312 (DEKVLDRTIE…DLGLGLKNDK (70 aa)) are alpha C-terminal domain (alpha-CTD).

The protein belongs to the RNA polymerase alpha chain family. In terms of assembly, homodimer. The RNAP catalytic core consists of 2 alpha, 1 beta, 1 beta' and 1 omega subunit. When a sigma factor is associated with the core the holoenzyme is formed, which can initiate transcription.

The enzyme catalyses RNA(n) + a ribonucleoside 5'-triphosphate = RNA(n+1) + diphosphate. Functionally, DNA-dependent RNA polymerase catalyzes the transcription of DNA into RNA using the four ribonucleoside triphosphates as substrates. The protein is DNA-directed RNA polymerase subunit alpha of Streptococcus agalactiae serotype III (strain NEM316).